The sequence spans 341 residues: Very-long-chain 3-oxoacyl-CoA reductase (341 aa).

Residues 15–35 (VVTAFSVIGIVFTILKFTSFA) traverse the membrane as a helical segment. NADP(+)-binding residues include valine 61, aspartate 115, asparagine 142, lysine 177, tyrosine 216, lysine 220, valine 249, and serine 251. The Proton donor role is filled by tyrosine 216. The active-site Lowers pKa of active site Tyr is lysine 220.

The protein belongs to the short-chain dehydrogenases/reductases (SDR) family.

It localises to the endoplasmic reticulum membrane. It catalyses the reaction a very-long-chain (3R)-3-hydroxyacyl-CoA + NADP(+) = a very-long-chain 3-oxoacyl-CoA + NADPH + H(+). Its pathway is lipid metabolism; fatty acid biosynthesis. Its function is as follows. Component of the microsomal membrane bound fatty acid elongation system, which produces the 26-carbon very long-chain fatty acids (VLCFA) from palmitate. Catalyzes the reduction of the 3-ketoacyl-CoA intermediate that is formed in each cycle of fatty acid elongation. VLCFAs serve as precursors for ceramide and sphingolipids. The sequence is that of Very-long-chain 3-oxoacyl-CoA reductase from Schizosaccharomyces pombe (strain 972 / ATCC 24843) (Fission yeast).